The primary structure comprises 89 residues: uncharacterized protein (89 aa).

Position 1 (M1) is a topological domain, cytoplasmic. A helical membrane pass occupies residues 2–22 (LFEIIYIVSSLFYIVSIIYTL). Topologically, residues 23 to 89 (MRIKHINTVA…ELKKSKLCEG (67 aa)) are extracellular.

It localises to the host membrane. This is an uncharacterized protein from Sulfolobus islandicus filamentous virus (isolate Iceland/Hveragerdi) (SIFV).